Reading from the N-terminus, the 388-residue chain is Succinate--CoA ligase [ADP-forming] subunit beta (388 aa).

Residues Lys-9–Glu-244 form the ATP-grasp domain. Residues Lys-46, Gly-53–Gly-55, Glu-99, Ala-102, and Glu-107 each bind ATP. Residues Asn-199 and Asp-213 each contribute to the Mg(2+) site. Residues Asn-264 and Gly-321–Met-323 each bind substrate.

The protein belongs to the succinate/malate CoA ligase beta subunit family. In terms of assembly, heterotetramer of two alpha and two beta subunits. Requires Mg(2+) as cofactor.

It catalyses the reaction succinate + ATP + CoA = succinyl-CoA + ADP + phosphate. It carries out the reaction GTP + succinate + CoA = succinyl-CoA + GDP + phosphate. The protein operates within carbohydrate metabolism; tricarboxylic acid cycle; succinate from succinyl-CoA (ligase route): step 1/1. Functionally, succinyl-CoA synthetase functions in the citric acid cycle (TCA), coupling the hydrolysis of succinyl-CoA to the synthesis of either ATP or GTP and thus represents the only step of substrate-level phosphorylation in the TCA. The beta subunit provides nucleotide specificity of the enzyme and binds the substrate succinate, while the binding sites for coenzyme A and phosphate are found in the alpha subunit. The protein is Succinate--CoA ligase [ADP-forming] subunit beta of Burkholderia multivorans (strain ATCC 17616 / 249).